The chain runs to 67 residues: Large ribosomal subunit protein bL31 (67 aa).

Zn(2+) is bound by residues cysteine 16, cysteine 18, cysteine 36, and cysteine 39.

The protein belongs to the bacterial ribosomal protein bL31 family. Type A subfamily. Part of the 50S ribosomal subunit. Requires Zn(2+) as cofactor.

Its function is as follows. Binds the 23S rRNA. The sequence is that of Large ribosomal subunit protein bL31 from Treponema denticola (strain ATCC 35405 / DSM 14222 / CIP 103919 / JCM 8153 / KCTC 15104).